The primary structure comprises 909 residues: MWPQPHLPPHPMMSEKTRQNKLAEAKKKFTDYRQWNIAGVGTRATDTKKKKINNGTNPETTTSEGCHSPEDTQQNRAQLKEEKKASHQHQEALRREIEAQDHTIRILTCQKTELETALYYSQDAARKFEDGNLGTPSSFNLALSQAFRGSPLGCVSTSLIPGESKDLAGRLHHSWHFAGELQRALSAVSTWHKKADRYIEELTKERDALSLELYRNTITNEELKKKNAELQEKLRLAESEKSEIQLNVKELKRKLERAKFLLPQVQTNTLQEEMWRQEEELREQEKKIRKQEEKMWRQEERLREQEGKMREQEEKMRRQEKRLREQEKELREQEKELREQKKLREQEEQMQEQEEKMWEQEEKMREQEEKMWRQEERLWEQEKQMREQEQKMRDQEERMWEQDERLREKEERMREQEKMWEQVEKMREEKKMQEQEKKTRDQEEKMQEEERIREREKKMREEEETMREQEEKMQKQEENMWEQEEKEWQQQRLPEQKEKLWEQEKMQEQEEKIWEQEEKIRDQEEMWGQEKKMWRQEKMREQEDVETGGEAAGAGEADVGAGGEDAGSGAEDVGPGGEDVGAGREAAGEGGENAGAEEDVAAGGEDAGGEEDAGAGEEDMGPGGEDARGGEDAGAGEEDAGGGGDDAGAGGEDAGAGREDAGAGGEDVGAGREDAGAGGEDVGAGGEDVGAGRRRCGSSRGCRNRRRSCGNTRRCRSRRSGAEDVGPEGEDVGAGREAAGEGGENAGAEDVAAGGEDAGEEEDAGGEDAGAAREDAGAGGDDVGAGREDAGAGGEDVGAGGEDAGAGGEDAGAGGEDAGPGGEDAGAGGEDAGPGGEDAGAGGEDAGPGGEDVGPGGEDVGAGGEDVGAGGDAREGGEDTRSEREDAGEAARARGAVLRALPPSLQSSL.

The segment covering 1–11 has biased composition (pro residues); the sequence is MWPQPHLPPHP. Disordered stretches follow at residues 1 to 88, 300 to 362, 381 to 408, 425 to 494, and 524 to 909; these read MWPQ…ASHQ, ERLR…EQEE, QEKQMREQEQKMRDQEERMWEQDERLRE, KMRE…QRLP, and EEMW…QSSL. Residues 13–31 are compositionally biased toward basic and acidic residues; it reads MSEKTRQNKLAEAKKKFTD. Positions 53–77 are enriched in polar residues; that stretch reads NNGTNPETTTSEGCHSPEDTQQNRA. The segment covering 78-88 has biased composition (basic and acidic residues); the sequence is QLKEEKKASHQ. Residues 192–526 adopt a coiled-coil conformation; it reads HKKADRYIEE…EEKIRDQEEM (335 aa). Basic and acidic residues-rich tracts occupy residues 425-478 and 524-542; these read KMRE…KQEE and EEMWGQEKKMWRQEKMREQ. Residues 607 to 620 show a composition bias toward acidic residues; the sequence is AGGEEDAGAGEEDM. Composition is skewed to gly residues over residues 641-654 and 676-689; these read GGGGDDAGAGGEDA and GAGGEDVGAGGEDV. Positions 692–719 are enriched in basic residues; that stretch reads GRRRCGSSRGCRNRRRSCGNTRRCRSRR. Over residues 746-755 the composition is skewed to low complexity; the sequence is AGAEDVAAGG. Positions 757–766 are enriched in acidic residues; it reads DAGEEEDAGG. The span at 791–871 shows a compositional bias: gly residues; it reads GAGGEDVGAG…AGGEDVGAGG (81 aa). Basic and acidic residues predominate over residues 872–892; the sequence is DAREGGEDTRSEREDAGEAAR.

Belongs to the GOLGA6 family.

The protein is Golgin subfamily A member 6-like protein 2 (GOLGA6L2) of Homo sapiens (Human).